Consider the following 175-residue polypeptide: Small ribosomal subunit protein uS5 (175 aa).

An S5 DRBM domain is found at Leu-11 to Val-74.

This sequence belongs to the universal ribosomal protein uS5 family. As to quaternary structure, part of the 30S ribosomal subunit. Contacts proteins S4 and S8.

Functionally, with S4 and S12 plays an important role in translational accuracy. Its function is as follows. Located at the back of the 30S subunit body where it stabilizes the conformation of the head with respect to the body. The polypeptide is Small ribosomal subunit protein uS5 (Rickettsia typhi (strain ATCC VR-144 / Wilmington)).